We begin with the raw amino-acid sequence, 651 residues long: Probable potassium transport system protein Kup (651 aa).

12 helical membrane passes run 41-61 (LVLGALGVVYGDIGTSPIYAF), 82-102 (VVSFIFWALTLVVTVKYVLFV), 130-150 (LILGVGICGAALFFGDAVITP), 163-183 (IVAPNLTPFVVPATVVILVTL), 194-214 (VAIVFGPIMALWFVALGASGL), 235-255 (FLTVSPAVAFVTVGAVFLAMT), 276-296 (WLWIVFPCLLLNYFGQAAFIL), 309-329 (MIPSFALWPMVLLATAATVIA), 366-386 (IYIPRVNLLLGLAVVILVLGF), 395-415 (AYGIAVTGNMLVTTVLLYIVM), 426-446 (ALPIILGFLVIDMLFFSANII), and 450-470 (EGGWASIGIATVLVLIMWTWV).

The protein belongs to the HAK/KUP transporter (TC 2.A.72) family.

Its subcellular location is the cell inner membrane. The catalysed reaction is K(+)(in) + H(+)(in) = K(+)(out) + H(+)(out). Its function is as follows. Transport of potassium into the cell. Likely operates as a K(+):H(+) symporter. This Brucella ovis (strain ATCC 25840 / 63/290 / NCTC 10512) protein is Probable potassium transport system protein Kup.